The chain runs to 131 residues: Methylglyoxal synthase (131 aa).

The MGS-like domain occupies 1-131 (MKIALIAHDK…GDLDYRKLRK (131 aa)). Residues H8, K12, 34–37 (TGTT), and 54–55 (SG) each bind substrate. The Proton donor/acceptor role is filled by D60. H87 lines the substrate pocket.

It belongs to the methylglyoxal synthase family.

It carries out the reaction dihydroxyacetone phosphate = methylglyoxal + phosphate. Its function is as follows. Catalyzes the formation of methylglyoxal from dihydroxyacetone phosphate. The protein is Methylglyoxal synthase of Bacillus mycoides (strain KBAB4) (Bacillus weihenstephanensis).